The sequence spans 469 residues: VDTAEKLSKNGCASNYGATQISVWSMARALNASIPPLTNPMTPSMTFRNSNAGRISGVALVGVIIGGALALFLVVALGVVPYFFLHNTRDNNLAPKELTDPVTLIFTDIESSTALWAAHPELMPDAVATHHRLIRSLIGRYGCYEVKTVGDSFMIASKSPFAAVQLAQELQLCFLHHDWGTNAIDESYQQLEQQRAEEDAKYTPPTARLDLKVYSRLWNGLRVRVGIHTGLCDIRRDEVTKGYDYYGRTSNMAARTESVGNGGQVLMTTAAYMSLSAEEREQIDVTALGDVPLRGVAKPVEMYQLNAVPGRTFAGLRLEHELLNDDEDQTTTSCSDHSSSRTDLSVAAQTIAASLQSLLGTFTPAQRQKALIPFCERWRVPLPQKVGNVWDNDGCQEAIRRVAAKVGRVMDFGTRKASSSVTSLERGGSLFSAGGATVATVASSSNFSCVDGRCGTVQLIDLENDSTTS.

Residues 1–59 (VDTAEKLSKNGCASNYGATQISVWSMARALNASIPPLTNPMTPSMTFRNSNAGRISGVA) lie on the Extracellular side of the membrane. The N-linked (GlcNAc...) asparagine glycan is linked to Asn-31. Residues 60 to 80 (LVGVIIGGALALFLVVALGVV) traverse the membrane as a helical segment. Residues 81-469 (PYFFLHNTRD…IDLENDSTTS (389 aa)) lie on the Cytoplasmic side of the membrane. One can recognise a Guanylate cyclase domain in the interval 103–257 (TLIFTDIESS…RTSNMAARTE (155 aa)). Mg(2+) contacts are provided by Asp-108 and Asp-151.

Belongs to the adenylyl cyclase class-3 family. Requires Mg(2+) as cofactor.

It is found in the cell membrane. The enzyme catalyses ATP = 3',5'-cyclic AMP + diphosphate. Could act as a receptor for an unknown ligand. The chain is Receptor-type adenylate cyclase (ESAG4C) from Trypanosoma equiperdum.